Consider the following 269-residue polypeptide: Tryptophan synthase alpha chain (269 aa).

Active-site proton acceptor residues include Glu-49 and Asp-60.

Belongs to the TrpA family. Tetramer of two alpha and two beta chains.

The enzyme catalyses (1S,2R)-1-C-(indol-3-yl)glycerol 3-phosphate + L-serine = D-glyceraldehyde 3-phosphate + L-tryptophan + H2O. Its pathway is amino-acid biosynthesis; L-tryptophan biosynthesis; L-tryptophan from chorismate: step 5/5. Functionally, the alpha subunit is responsible for the aldol cleavage of indoleglycerol phosphate to indole and glyceraldehyde 3-phosphate. In Pseudomonas fluorescens (strain SBW25), this protein is Tryptophan synthase alpha chain.